A 245-amino-acid chain; its full sequence is 1-(5-phosphoribosyl)-5-[(5-phosphoribosylamino)methylideneamino] imidazole-4-carboxamide isomerase (245 aa).

The active-site Proton acceptor is aspartate 7. Residue aspartate 129 is the Proton donor of the active site.

Belongs to the HisA/HisF family.

It is found in the cytoplasm. The catalysed reaction is 1-(5-phospho-beta-D-ribosyl)-5-[(5-phospho-beta-D-ribosylamino)methylideneamino]imidazole-4-carboxamide = 5-[(5-phospho-1-deoxy-D-ribulos-1-ylimino)methylamino]-1-(5-phospho-beta-D-ribosyl)imidazole-4-carboxamide. The protein operates within amino-acid biosynthesis; L-histidine biosynthesis; L-histidine from 5-phospho-alpha-D-ribose 1-diphosphate: step 4/9. The protein is 1-(5-phosphoribosyl)-5-[(5-phosphoribosylamino)methylideneamino] imidazole-4-carboxamide isomerase of Shigella boydii serotype 4 (strain Sb227).